We begin with the raw amino-acid sequence, 81 residues long: D-alanyl carrier protein (81 aa).

A Carrier domain is found at 1-81 (MADEAIKNGV…KIIAKVEQAQ (81 aa)). An O-(pantetheine 4'-phosphoryl)serine modification is found at Ser39.

The protein belongs to the DltC family. In terms of processing, 4'-phosphopantetheine is transferred from CoA to a specific serine of apo-DCP.

It is found in the cytoplasm. Its pathway is cell wall biogenesis; lipoteichoic acid biosynthesis. Functionally, carrier protein involved in the D-alanylation of lipoteichoic acid (LTA). The loading of thioester-linked D-alanine onto DltC is catalyzed by D-alanine--D-alanyl carrier protein ligase DltA. The DltC-carried D-alanyl group is further transferred to cell membrane phosphatidylglycerol (PG) by forming an ester bond, probably catalyzed by DltD. D-alanylation of LTA plays an important role in modulating the properties of the cell wall in Gram-positive bacteria, influencing the net charge of the cell wall. The polypeptide is D-alanyl carrier protein (Lacticaseibacillus casei (strain BL23) (Lactobacillus casei)).